The sequence spans 222 residues: GTP cyclohydrolase 1 (222 aa).

Positions 111, 114, and 182 each coordinate Zn(2+).

The protein belongs to the GTP cyclohydrolase I family. Homomer.

The enzyme catalyses GTP + H2O = 7,8-dihydroneopterin 3'-triphosphate + formate + H(+). It participates in cofactor biosynthesis; 7,8-dihydroneopterin triphosphate biosynthesis; 7,8-dihydroneopterin triphosphate from GTP: step 1/1. The chain is GTP cyclohydrolase 1 from Klebsiella pneumoniae (strain 342).